Here is a 523-residue protein sequence, read N- to C-terminus: Bifunctional purine biosynthesis protein PurH (523 aa).

In terms of domain architecture, MGS-like spans methionine 1–threonine 149.

The protein belongs to the PurH family.

It carries out the reaction (6R)-10-formyltetrahydrofolate + 5-amino-1-(5-phospho-beta-D-ribosyl)imidazole-4-carboxamide = 5-formamido-1-(5-phospho-D-ribosyl)imidazole-4-carboxamide + (6S)-5,6,7,8-tetrahydrofolate. The enzyme catalyses IMP + H2O = 5-formamido-1-(5-phospho-D-ribosyl)imidazole-4-carboxamide. It functions in the pathway purine metabolism; IMP biosynthesis via de novo pathway; 5-formamido-1-(5-phospho-D-ribosyl)imidazole-4-carboxamide from 5-amino-1-(5-phospho-D-ribosyl)imidazole-4-carboxamide (10-formyl THF route): step 1/1. It participates in purine metabolism; IMP biosynthesis via de novo pathway; IMP from 5-formamido-1-(5-phospho-D-ribosyl)imidazole-4-carboxamide: step 1/1. This chain is Bifunctional purine biosynthesis protein PurH, found in Chlorobaculum parvum (strain DSM 263 / NCIMB 8327) (Chlorobium vibrioforme subsp. thiosulfatophilum).